Consider the following 679-residue polypeptide: Glycine--tRNA ligase beta subunit (679 aa).

This sequence belongs to the class-II aminoacyl-tRNA synthetase family. Tetramer of two alpha and two beta subunits.

It localises to the cytoplasm. The enzyme catalyses tRNA(Gly) + glycine + ATP = glycyl-tRNA(Gly) + AMP + diphosphate. This chain is Glycine--tRNA ligase beta subunit (glyS), found in Bacillus subtilis (strain 168).